Consider the following 653-residue polypeptide: MKRICGSLLLLGLSISAALAAPASRPAAFDYANLSSVDKVALRTMPAVDVAKAKAEDLQRDKRGDIPRFALAIDVDMTPQNSGAWEYTADGQFAVWRQRVRSEKALSLNFGFTDYYMPAGGRLLVYPATQAPAGDRGLISQYDASNNNSARQLWTAVVPGAEAVIEAVIPRDKVGEFKLRLTKVNHDYVGFGPLARRLAAASGEKGVSGSCNIDVVCPEGDGRRDIIRAVGAYSKSGTLACTGSLVNNTANDRKMYFLTAHHCGMGTASTAASIVVYWNYQNSTCRAPNTPASGANGDGSMSQTQSGSTVKATYATSDFTLLELNNAANPAFNLFWAGWDRRDQNYPGAIAIHHPNVAEKRISNSTSPTSFVAWGGGAGTTHLNVQWQPSGGVTEPGSSGSPIYSPEKRVLGQLHGGPSSCSATGTNRSDQYGRVFTSWTGGGAAASRLSDWLDPASTGAQFIDGLDSGGGTPNTPPVANFTSTTSGLTATFTDSSTDSDGSIASRSWNFGDGSTSTATNPSKTYAAAGTYTVTLTVTDNGGATNTKTGSVTVSGGPGAQTYTNDTDVAIPDNATVESPITVSGRTGNGSATTPIQVTIYHTYKSDLKVDLVAPDGTVYNLHNRTGGSAHNIIQTFTKDLSSEAAQRAPGSCG.

The segment at residues 1-20 (MKRICGSLLLLGLSISAALA) is a signal peptide (or 27). The propeptide occupies 21-205 (APASRPAAFD…RRLAAASGEK (185 aa)). Disulfide bonds link Cys211/Cys421, Cys217/Cys285, and Cys241/Cys263. Residues His262, Asp318, and Ser399 each act as charge relay system in the active site. The PKD domain maps to 474-553 (NTPPVANFTS…TNTKTGSVTV (80 aa)). Positions 474-653 (NTPPVANFTS…AAQRAPGSCG (180 aa)) are cleaved as a propeptide — thr/Ser-rich. The region spanning 555 to 653 (GGPGAQTYTN…AAQRAPGSCG (99 aa)) is the P/Homo B domain.

Belongs to the peptidase S1 family. Three disulfide bonds are present.

The protein localises to the secreted. The enzyme catalyses Preferential cleavage: Lys-|-Xaa, including Lys-|-Pro.. The chain is Protease 1 from Achromobacter lyticus.